The following is a 130-amino-acid chain: Small ribosomal subunit protein uS9 (130 aa).

The protein belongs to the universal ribosomal protein uS9 family.

In Magnetococcus marinus (strain ATCC BAA-1437 / JCM 17883 / MC-1), this protein is Small ribosomal subunit protein uS9.